Consider the following 134-residue polypeptide: Small ribosomal subunit protein uS9 (134 aa).

Positions 109-134 (KGDPRRKEPKKFGGRGARARRQKSYR) are disordered. The span at 115 to 134 (KEPKKFGGRGARARRQKSYR) shows a compositional bias: basic residues.

This sequence belongs to the universal ribosomal protein uS9 family.

This Methanopyrus kandleri (strain AV19 / DSM 6324 / JCM 9639 / NBRC 100938) protein is Small ribosomal subunit protein uS9.